Consider the following 406-residue polypeptide: 3-oxoacyl-[acyl-carrier-protein] synthase 1 (406 aa).

In terms of domain architecture, Ketosynthase family 3 (KS3) spans 1-405 (MRRVVITGIG…GTNVSLIVKK (405 aa)). Residues cysteine 164, histidine 299, and histidine 335 each act as for beta-ketoacyl synthase activity in the active site.

Belongs to the thiolase-like superfamily. Beta-ketoacyl-ACP synthases family. Homodimer.

It localises to the cytoplasm. The catalysed reaction is a fatty acyl-[ACP] + malonyl-[ACP] + H(+) = a 3-oxoacyl-[ACP] + holo-[ACP] + CO2. It carries out the reaction (3Z)-decenoyl-[ACP] + malonyl-[ACP] + H(+) = 3-oxo-(5Z)-dodecenoyl-[ACP] + holo-[ACP] + CO2. It participates in lipid metabolism; fatty acid biosynthesis. Its function is as follows. Involved in the type II fatty acid elongation cycle. Catalyzes the elongation of a wide range of acyl-ACP by the addition of two carbons from malonyl-ACP to an acyl acceptor. Can also use unsaturated fatty acids. Catalyzes a key reaction in unsaturated fatty acid (UFA) synthesis, the elongation of the cis-3-decenoyl-ACP produced by FabA. The polypeptide is 3-oxoacyl-[acyl-carrier-protein] synthase 1 (fabB) (Buchnera aphidicola subsp. Acyrthosiphon pisum (strain APS) (Acyrthosiphon pisum symbiotic bacterium)).